The following is a 23-amino-acid chain: Acidic phospholipase A2 Cvv-E6c (23 aa).

The cofactor is Ca(2+). Contains 7 disulfide bonds. In terms of tissue distribution, expressed by the venom gland.

It localises to the secreted. It catalyses the reaction a 1,2-diacyl-sn-glycero-3-phosphocholine + H2O = a 1-acyl-sn-glycero-3-phosphocholine + a fatty acid + H(+). In terms of biological role, snake venom phospholipase A2 (PLA2) that significantly inhibits ADP-induced platelet aggregation in platelet-rich plasma of human, rabbit and guinea pig. PLA2 catalyzes the calcium-dependent hydrolysis of the 2-acyl groups in 3-sn-phosphoglycerides. The polypeptide is Acidic phospholipase A2 Cvv-E6c (Crotalus viridis viridis (Prairie rattlesnake)).